A 299-amino-acid polypeptide reads, in one-letter code: Probable alpha-L-glutamate ligase (299 aa).

One can recognise an ATP-grasp domain in the interval L111–E293. ATP contacts are provided by residues K147, D184 to F185, D193, and R217 to N219. D254, E266, and N268 together coordinate Mg(2+). Mn(2+)-binding residues include D254, E266, and N268.

It belongs to the RimK family. Mg(2+) serves as cofactor. It depends on Mn(2+) as a cofactor.

This is Probable alpha-L-glutamate ligase from Mannheimia succiniciproducens (strain KCTC 0769BP / MBEL55E).